We begin with the raw amino-acid sequence, 493 residues long: Glutamyl-tRNA(Gln) amidotransferase subunit A (493 aa).

Residues lysine 79 and serine 159 each act as charge relay system in the active site. Serine 183 functions as the Acyl-ester intermediate in the catalytic mechanism.

Belongs to the amidase family. GatA subfamily. As to quaternary structure, heterotrimer of A, B and C subunits.

It catalyses the reaction L-glutamyl-tRNA(Gln) + L-glutamine + ATP + H2O = L-glutaminyl-tRNA(Gln) + L-glutamate + ADP + phosphate + H(+). In terms of biological role, allows the formation of correctly charged Gln-tRNA(Gln) through the transamidation of misacylated Glu-tRNA(Gln) in organisms which lack glutaminyl-tRNA synthetase. The reaction takes place in the presence of glutamine and ATP through an activated gamma-phospho-Glu-tRNA(Gln). The sequence is that of Glutamyl-tRNA(Gln) amidotransferase subunit A from Brucella ovis (strain ATCC 25840 / 63/290 / NCTC 10512).